The sequence spans 387 residues: 3-ketoacyl-CoA thiolase (387 aa).

The active-site Acyl-thioester intermediate is the Cys-91. Residues His-343 and Cys-373 each act as proton acceptor in the active site.

Belongs to the thiolase-like superfamily. Thiolase family. Heterotetramer of two alpha chains (FadB) and two beta chains (FadA).

The protein resides in the cytoplasm. It catalyses the reaction an acyl-CoA + acetyl-CoA = a 3-oxoacyl-CoA + CoA. Its pathway is lipid metabolism; fatty acid beta-oxidation. Its function is as follows. Catalyzes the final step of fatty acid oxidation in which acetyl-CoA is released and the CoA ester of a fatty acid two carbons shorter is formed. The sequence is that of 3-ketoacyl-CoA thiolase from Escherichia coli O139:H28 (strain E24377A / ETEC).